The chain runs to 517 residues: MAMALALRRLSSSADKPLQRLFNGGHLYSMSSLPSEAVYEKERPGVTWPKQLNAPLEVVDPEIADIIELEKARQWKGLELIPSENFTSLSVMQAVGSVMTNKYSEGYPGARYYGGNEYIDMAETLCQKRALEAFRLDPAKWGVNVQPLSGSPANFHVYTALLKAHDRIMALDLPHGGHLSHGYQTDTKKISAVSIFFETMPYRLNESTGYIDYDQLEKSATLFRPKLIVAGASAYARLYDYARIRKVCDKQKAIMLADMAHISGLVAAGVIPSPFDYADVVTTTTHKSLRGPRGAMIFFRKGLKEVNKQGKEVFYDYEDKINQAVFPGLQGGPHNHTITGLAVALKQATTAEYKAYQEQVMSNSAKFAETLVKSGYELVSGGTENHLVLVNLKNKGIDGSKVEKVLEAVHIAANKNTVPGDVSAMVPGGIRMGTPALTSRGFVEEDFAKVAYFFDLAVKLAVKIKGEAKGTKLKDFVTAMESSAIQSEISKLRHDVEEYAKQFPTIGFEKETMKYKN.

A mitochondrion-targeting transit peptide spans 1–31 (MAMALALRRLSSSADKPLQRLFNGGHLYSMS). Lysine 287 bears the N6-(pyridoxal phosphate)lysine mark.

The protein belongs to the SHMT family. Homotetramer. Requires pyridoxal 5'-phosphate as cofactor.

Its subcellular location is the mitochondrion. The catalysed reaction is (6R)-5,10-methylene-5,6,7,8-tetrahydrofolate + glycine + H2O = (6S)-5,6,7,8-tetrahydrofolate + L-serine. It participates in one-carbon metabolism; tetrahydrofolate interconversion. In terms of biological role, catalyzes the interconversion of serine and glycine. This chain is Serine hydroxymethyltransferase 1, mitochondrial, found in Flaveria pringlei.